The following is a 156-amino-acid chain: Small ribosomal subunit protein uS7 (156 aa).

Belongs to the universal ribosomal protein uS7 family. Part of the 30S ribosomal subunit. Contacts proteins S9 and S11.

Functionally, one of the primary rRNA binding proteins, it binds directly to 16S rRNA where it nucleates assembly of the head domain of the 30S subunit. Is located at the subunit interface close to the decoding center, probably blocks exit of the E-site tRNA. The protein is Small ribosomal subunit protein uS7 of Rhodopseudomonas palustris (strain BisB5).